A 394-amino-acid chain; its full sequence is Elongation factor Tu (394 aa).

Residues 10–204 (KPHVNIGTIG…AVDEYIPTPD (195 aa)) form the tr-type G domain. The interval 19–26 (GHIDHGKT) is G1. 19–26 (GHIDHGKT) contacts GTP. Threonine 26 contributes to the Mg(2+) binding site. The G2 stretch occupies residues 60–64 (GITIN). The interval 81–84 (DCPG) is G3. GTP-binding positions include 81–85 (DCPGH) and 136–139 (NKCD). The G4 stretch occupies residues 136 to 139 (NKCD). Residues 174 to 176 (SAL) are G5.

It belongs to the TRAFAC class translation factor GTPase superfamily. Classic translation factor GTPase family. EF-Tu/EF-1A subfamily. In terms of assembly, monomer.

It localises to the cytoplasm. The enzyme catalyses GTP + H2O = GDP + phosphate + H(+). GTP hydrolase that promotes the GTP-dependent binding of aminoacyl-tRNA to the A-site of ribosomes during protein biosynthesis. The polypeptide is Elongation factor Tu (Mycoplasmoides gallisepticum (strain R(low / passage 15 / clone 2)) (Mycoplasma gallisepticum)).